Reading from the N-terminus, the 1150-residue chain is ATP-dependent helicase/deoxyribonuclease subunit B (1150 aa).

Residue 8-15 (GRAGSGKS) participates in ATP binding. [4Fe-4S] cluster-binding residues include Cys-786, Cys-1106, Cys-1109, and Cys-1115.

This sequence belongs to the helicase family. AddB/RexB type 1 subfamily. Heterodimer of AddA and AddB. Requires Mg(2+) as cofactor. The cofactor is [4Fe-4S] cluster.

Functionally, the heterodimer acts as both an ATP-dependent DNA helicase and an ATP-dependent, dual-direction single-stranded exonuclease. Recognizes the chi site generating a DNA molecule suitable for the initiation of homologous recombination. The AddB subunit has 5' -&gt; 3' nuclease activity but not helicase activity. The sequence is that of ATP-dependent helicase/deoxyribonuclease subunit B from Clostridium botulinum (strain Langeland / NCTC 10281 / Type F).